The primary structure comprises 170 residues: Bifunctional protein PyrR (170 aa).

A PRPP-binding motif is present at residues L90–T102.

It belongs to the purine/pyrimidine phosphoribosyltransferase family. PyrR subfamily.

It catalyses the reaction UMP + diphosphate = 5-phospho-alpha-D-ribose 1-diphosphate + uracil. Regulates the transcription of the pyrimidine nucleotide (pyr) operon in response to exogenous pyrimidines. In terms of biological role, also displays a weak uracil phosphoribosyltransferase activity which is not physiologically significant. This is Bifunctional protein PyrR from Pseudomonas savastanoi pv. phaseolicola (strain 1448A / Race 6) (Pseudomonas syringae pv. phaseolicola (strain 1448A / Race 6)).